The following is a 392-amino-acid chain: Chaperone protein DnaJ 1 (392 aa).

In terms of domain architecture, J spans 4–67; the sequence is DYYEILGVSH…QKRAVFDRGG (64 aa). The segment at 134–216 adopts a CR-type zinc-finger fold; it reads GVTKSLEVDT…CSGEGRVRTT (83 aa). Zn(2+) is bound by residues cysteine 147, cysteine 150, cysteine 164, cysteine 167, cysteine 190, cysteine 193, cysteine 204, and cysteine 207. CXXCXGXG motif repeat units follow at residues 147 to 154, 164 to 171, 190 to 197, and 204 to 211; these read CPKCQGKG, CDTCQGRG, CPTCHGYG, and CQECSGEG. The interval 367–392 is disordered; that stretch reads ETNASASVEKSGGRGMFSRIKEAFGG.

Belongs to the DnaJ family. As to quaternary structure, homodimer. Zn(2+) serves as cofactor.

It localises to the cytoplasm. In terms of biological role, participates actively in the response to hyperosmotic and heat shock by preventing the aggregation of stress-denatured proteins and by disaggregating proteins, also in an autonomous, DnaK-independent fashion. Unfolded proteins bind initially to DnaJ; upon interaction with the DnaJ-bound protein, DnaK hydrolyzes its bound ATP, resulting in the formation of a stable complex. GrpE releases ADP from DnaK; ATP binding to DnaK triggers the release of the substrate protein, thus completing the reaction cycle. Several rounds of ATP-dependent interactions between DnaJ, DnaK and GrpE are required for fully efficient folding. Also involved, together with DnaK and GrpE, in the DNA replication of plasmids through activation of initiation proteins. This is Chaperone protein DnaJ 1 from Cutibacterium acnes (strain DSM 16379 / KPA171202) (Propionibacterium acnes).